A 371-amino-acid chain; its full sequence is Opine oxidase subunit B (371 aa).

As to quaternary structure, heterodimer of a subunit A and a subunit B.

It functions in the pathway opine metabolism; octopine degradation. Its function is as follows. Oxidative cleavage of octopine into L-arginine and pyruvate. This Agrobacterium tumefaciens (strain Ach5) protein is Opine oxidase subunit B (ooxB).